The primary structure comprises 309 residues: Nudix hydrolase 14, chloroplastic (309 aa).

The N-terminal 60 residues, 1-60 (MAGFTLLPSRLLAFPSRALPRRLHHHHAKLILRCKMSSSSSSLTQSITLPSQPNEPVLVS), are a transit peptide targeting the chloroplast. The region spanning 139-292 (ARGPAVAVLI…KVLMSIGLYE (154 aa)) is the Nudix hydrolase domain. Positions 179-200 (MLDDDKGDFVGTAVREVEEEIG) match the Nudix box motif. Mg(2+) contacts are provided by glutamate 194 and glutamate 198.

It belongs to the Nudix hydrolase family. Homodimer. Requires Mg(2+) as cofactor. The cofactor is Mn(2+). In terms of tissue distribution, expressed in roots, leaves, stems and inflorescences.

The protein resides in the plastid. Its subcellular location is the chloroplast. It carries out the reaction ADP-sugar + H2O = AMP + alpha-D-aldose 1-phosphate.. Its function is as follows. Mediates the hydrolysis of some nucleoside diphosphate derivatives. Can use ADP-glucose, ADP-mannose and ADP-ribose as substrates. Regulates the intracellular ADP-glucose levels linked to starch biosynthesis. The protein is Nudix hydrolase 14, chloroplastic (NUDT14) of Arabidopsis thaliana (Mouse-ear cress).